Consider the following 535-residue polypeptide: GMP synthase [glutamine-hydrolyzing] (535 aa).

Residues 4–210 (KILILDFGSQ…VHEICKCKPD (207 aa)) enclose the Glutamine amidotransferase type-1 domain. Cysteine 85 serves as the catalytic Nucleophile. Catalysis depends on residues histidine 184 and glutamate 186. A GMPS ATP-PPase domain is found at 211–403 (WVMGDYIAEA…LGLPREMVYR (193 aa)). Residue 238-244 (SGGVDSS) participates in ATP binding.

In terms of assembly, homodimer.

It catalyses the reaction XMP + L-glutamine + ATP + H2O = GMP + L-glutamate + AMP + diphosphate + 2 H(+). Its pathway is purine metabolism; GMP biosynthesis; GMP from XMP (L-Gln route): step 1/1. Functionally, catalyzes the synthesis of GMP from XMP. In Polynucleobacter necessarius subsp. necessarius (strain STIR1), this protein is GMP synthase [glutamine-hydrolyzing].